The following is a 316-amino-acid chain: Glutathione synthetase (316 aa).

Positions 124–311 constitute an ATP-grasp domain; it reads NEKLAALLFP…IAGLLFDAIE (188 aa). 151-208 is an ATP binding site; that stretch reads FVLAHGQAVLKPLDGMGGRSIFRSGTGDPNLNVILETLTDGGRKLTLAQRFIPDITAG. Residues glutamate 282 and asparagine 284 each contribute to the Mg(2+) site.

The protein belongs to the prokaryotic GSH synthase family. Mg(2+) is required as a cofactor. The cofactor is Mn(2+).

The catalysed reaction is gamma-L-glutamyl-L-cysteine + glycine + ATP = glutathione + ADP + phosphate + H(+). Its pathway is sulfur metabolism; glutathione biosynthesis; glutathione from L-cysteine and L-glutamate: step 2/2. In Xanthomonas campestris pv. campestris (strain ATCC 33913 / DSM 3586 / NCPPB 528 / LMG 568 / P 25), this protein is Glutathione synthetase.